The primary structure comprises 371 residues: tRNA-specific 2-thiouridylase MnmA (371 aa).

ATP contacts are provided by residues 13 to 20 (GMSGGVDS) and Met-39. The segment at 99-101 (NPD) is interaction with target base in tRNA. Cys-104 serves as the catalytic Nucleophile. Cysteines 104 and 200 form a disulfide. Gly-128 is a binding site for ATP. An interaction with tRNA region spans residues 150 to 152 (KDQ). Cys-200 functions as the Cysteine persulfide intermediate in the catalytic mechanism. The interaction with tRNA stretch occupies residues 308 to 309 (RY).

This sequence belongs to the MnmA/TRMU family.

Its subcellular location is the cytoplasm. The enzyme catalyses S-sulfanyl-L-cysteinyl-[protein] + uridine(34) in tRNA + AH2 + ATP = 2-thiouridine(34) in tRNA + L-cysteinyl-[protein] + A + AMP + diphosphate + H(+). Functionally, catalyzes the 2-thiolation of uridine at the wobble position (U34) of tRNA, leading to the formation of s(2)U34. This chain is tRNA-specific 2-thiouridylase MnmA, found in Bacillus cereus (strain ATCC 14579 / DSM 31 / CCUG 7414 / JCM 2152 / NBRC 15305 / NCIMB 9373 / NCTC 2599 / NRRL B-3711).